We begin with the raw amino-acid sequence, 282 residues long: Probable endonuclease 4 (282 aa).

Zn(2+) contacts are provided by His69, His109, Glu145, Asp179, His182, His216, Asp229, His231, and Glu261.

The protein belongs to the AP endonuclease 2 family. Zn(2+) serves as cofactor.

It catalyses the reaction Endonucleolytic cleavage to 5'-phosphooligonucleotide end-products.. In terms of biological role, endonuclease IV plays a role in DNA repair. It cleaves phosphodiester bonds at apurinic or apyrimidinic (AP) sites, generating a 3'-hydroxyl group and a 5'-terminal sugar phosphate. The sequence is that of Probable endonuclease 4 from Magnetococcus marinus (strain ATCC BAA-1437 / JCM 17883 / MC-1).